Here is a 958-residue protein sequence, read N- to C-terminus: Protein translocase subunit SecA (958 aa).

ATP is bound by residues Gln-87, 105–109, and Asp-524; that span reads GEGKT. The disordered stretch occupies residues 598-617; the sequence is RRIDNQLRGRSGRQGDPGRS. Residues Cys-939, Cys-941, Cys-950, and His-951 each coordinate Zn(2+).

This sequence belongs to the SecA family. As to quaternary structure, monomer and homodimer. Part of the essential Sec protein translocation apparatus which comprises SecA, SecYEG and auxiliary proteins SecDF-YajC and YidC. It depends on Zn(2+) as a cofactor.

The protein localises to the cell inner membrane. Its subcellular location is the cytoplasm. The enzyme catalyses ATP + H2O + cellular proteinSide 1 = ADP + phosphate + cellular proteinSide 2.. Functionally, part of the Sec protein translocase complex. Interacts with the SecYEG preprotein conducting channel. Has a central role in coupling the hydrolysis of ATP to the transfer of proteins into and across the cell membrane, serving both as a receptor for the preprotein-SecB complex and as an ATP-driven molecular motor driving the stepwise translocation of polypeptide chains across the membrane. The protein is Protein translocase subunit SecA of Methylobacterium sp. (strain 4-46).